Consider the following 144-residue polypeptide: Large ribosomal subunit protein uL13 (144 aa).

It belongs to the universal ribosomal protein uL13 family. Part of the 50S ribosomal subunit.

This protein is one of the early assembly proteins of the 50S ribosomal subunit, although it is not seen to bind rRNA by itself. It is important during the early stages of 50S assembly. The sequence is that of Large ribosomal subunit protein uL13 from Clostridium botulinum (strain ATCC 19397 / Type A).